The sequence spans 264 residues: NAD-capped RNA hydrolase NudC (264 aa).

R70 provides a ligand contact to substrate. C99 and C102 together coordinate Zn(2+). Substrate is bound at residue E112. C117 and C120 together coordinate Zn(2+). Y125 is a substrate binding site. Residues 126 to 253 enclose the Nudix hydrolase domain; that stretch reads PVICPSIIVA…TIARKLIHVT (128 aa). A162, E178, and E182 together coordinate a divalent metal cation. The Nudix box signature appears at 163 to 184; it reads GFVEVGETFEQAVQREVFEETG. Position 196 to 203 (196 to 203) interacts with substrate; it reads QPWAFPNS. Residue E223 coordinates a divalent metal cation. A246 is a binding site for substrate.

The protein belongs to the Nudix hydrolase family. NudC subfamily. As to quaternary structure, homodimer. Mg(2+) is required as a cofactor. Requires Mn(2+) as cofactor. It depends on Zn(2+) as a cofactor.

It catalyses the reaction a 5'-end NAD(+)-phospho-ribonucleoside in mRNA + H2O = a 5'-end phospho-adenosine-phospho-ribonucleoside in mRNA + beta-nicotinamide D-ribonucleotide + 2 H(+). The enzyme catalyses NAD(+) + H2O = beta-nicotinamide D-ribonucleotide + AMP + 2 H(+). It carries out the reaction NADH + H2O = reduced beta-nicotinamide D-ribonucleotide + AMP + 2 H(+). Functionally, mRNA decapping enzyme that specifically removes the nicotinamide adenine dinucleotide (NAD) cap from a subset of mRNAs by hydrolyzing the diphosphate linkage to produce nicotinamide mononucleotide (NMN) and 5' monophosphate mRNA. The NAD-cap is present at the 5'-end of some mRNAs and stabilizes RNA against 5'-processing. Has preference for mRNAs with a 5'-end purine. Catalyzes the hydrolysis of a broad range of dinucleotide pyrophosphates. The chain is NAD-capped RNA hydrolase NudC from Haemophilus influenzae (strain 86-028NP).